The sequence spans 155 residues: Ribonuclease H (155 aa).

The RNase H type-1 domain occupies 7-150 (AQNAVDLYTD…ADKLACKGRD (144 aa)). 4 residues coordinate Mg(2+): Asp16, Glu54, Asp77, and Asp142.

Belongs to the RNase H family. Monomer. Mg(2+) serves as cofactor.

The protein resides in the cytoplasm. It catalyses the reaction Endonucleolytic cleavage to 5'-phosphomonoester.. Its function is as follows. Endonuclease that specifically degrades the RNA of RNA-DNA hybrids. The protein is Ribonuclease H of Saccharopolyspora erythraea (strain ATCC 11635 / DSM 40517 / JCM 4748 / NBRC 13426 / NCIMB 8594 / NRRL 2338).